Here is a 245-residue protein sequence, read N- to C-terminus: Probable phosphatase YcdX (245 aa).

Zn(2+)-binding residues include H7, H9, H15, H40, E73, H101, H131, D192, and H194.

Belongs to the PHP family. As to quaternary structure, homotrimer. Requires Zn(2+) as cofactor.

The protein is Probable phosphatase YcdX of Escherichia coli O127:H6 (strain E2348/69 / EPEC).